We begin with the raw amino-acid sequence, 158 residues long: NAD(P)H-quinone oxidoreductase subunit N (158 aa).

Belongs to the complex I NdhN subunit family. As to quaternary structure, NDH-1 can be composed of about 15 different subunits; different subcomplexes with different compositions have been identified which probably have different functions.

The protein localises to the cellular thylakoid membrane. The enzyme catalyses a plastoquinone + NADH + (n+1) H(+)(in) = a plastoquinol + NAD(+) + n H(+)(out). It carries out the reaction a plastoquinone + NADPH + (n+1) H(+)(in) = a plastoquinol + NADP(+) + n H(+)(out). Functionally, NDH-1 shuttles electrons from an unknown electron donor, via FMN and iron-sulfur (Fe-S) centers, to quinones in the respiratory and/or the photosynthetic chain. The immediate electron acceptor for the enzyme in this species is believed to be plastoquinone. Couples the redox reaction to proton translocation, and thus conserves the redox energy in a proton gradient. Cyanobacterial NDH-1 also plays a role in inorganic carbon-concentration. The protein is NAD(P)H-quinone oxidoreductase subunit N of Gloeothece citriformis (strain PCC 7424) (Cyanothece sp. (strain PCC 7424)).